Here is a 168-residue protein sequence, read N- to C-terminus: uncharacterized protein (168 aa).

This is an uncharacterized protein from Saccharomyces cerevisiae (strain ATCC 204508 / S288c) (Baker's yeast).